The sequence spans 2766 residues: MTALVLWVSTLLSSVCLVAANIFEYQVDAQPLRPCELQREKAFLKQAEYVPQCSEDGSFQTVQCQNDGQSCWCVDSDGREVPGSRQLGRPTVCLSFCQLHKQRILLGSYINSTDALYLPQCQDSGNYAPVQCDLQRVQCWCVDTEGMEVYGTRQQGRPTRCPRSCEIRNRRLLHGVGDRSPPQCTADGEFMPVQCKFVNTTDMMIFDLIHNYNRFPDAFVTFSSFRGRFPEVSGYCYCADSQGRELAETGLELLLDEIYDTIFAGLDQASTFTQSTMYRILQRRFLAIQLVISGRFRCPTKCEVEQFAATRFGHSYIPRCHRDGHYQTVQCQTEGMCWCVDAQGREVPGTRQQGQPPSCAADQSCALERQQALSRFYFETPDYFSPQDLLSSEDRLAPVSGVRSDTSCPPRIKELFVDSGLLRSIAVEHYQRLSESRSLLREAIRAVFPSRELAGLALQFTTNPKRLQQNLFGGTFLANAAQFNLSGALGTRSTFNFSQFFQQFGLPGFLNRDRVTTLAKLLPVRLDSSSTPETLRVSEKTVAMNKRVVGNFGFKVNLQENQDALKFLVSLLELPEFLVFLQRAVSVPEDIARDLGDVMEMVFSAQACKQMPGKFFVPSCTAGGSYEDIQCYAGECWCVDSRGKELDGSRVRGGRPRCPTKCEKQRAQMQSLASAQPAGSSFFVPTCTREGYFLPVQCFNSECYCVDTEGQVIPGTQSTVGEAKQCPSVCQLQAEQAFLGVVGVLLSNSSMVPSISNVYIPQCSASGQWRHVQCDGPHEQVFEWYERWKTQNGDGQELTPAALLMKIVSYREVASRNFSLFLQSLYDAGQQRIFPVLAQYPSLQDVPQVVLEGATTPPGENIFLDPYIFWQILNGQLSQYPGPYSDFNMPLEHFNLRSCWCVDEAGQKLDGTQTKPGEIPACPGPCEEVKLRVLKFIKETEEIVSASNASSFPLGESFLVAKGIQLTSEELDLPPQFPSRDAFSEKFLRGGEYAIRLAAQSTLTFYQSLRASLGKSDGAASLLWSGPYMPQCNMIGGWEPVQCHAGTGQCWCVDGRGEFIPGSLMSRSSQMPQCPTNCELSRASGLISAWKQAGPQRNPGPGDLFIPVCLQTGEYVRKQTSGTGTWCVDPASGEGMPVNTNGSAQCPGLCDVLKSRALSRKVGLGYSPVCEALDGAFSPVQCDLAQGSCWCVLGSGEEVPGTRVVGTQPACESPQCPLPFSGSDVADGVIFCETASSSGVTTVQQCQLLCRQGLRSAFSPGPLICSLESQHWVTLPPPRACQRPQLWQTMQTQAHFQLLLPPGKMCSVDYSGLLQAFQVFILDELIARGFCQIQVKTFGTLVSSTVCDNSSIQVGCLTAERLGVNVTWKLQLEDISVGSLPDLYSIERAVTGQDLLGRFADLIQSGRFQLHLDSKTFSADTTLYFLNGDSFVTSPRTQLGCMEGFYRVPTTRQDALGCVKCPEGSFSQDGRCTPCPAGTYQEQAGSSACIPCPRGRTTITTGAFSKTHCVTDCQKNEAGLQCDQNGQYQASQKNRDSGEVFCVDSEGRKLQWLQTEAGLSESQCLMIRKFDKAPESKVIFDANSPVIVKSSVPSADSPLVQCLTDCANDEACSFLTVSTMESEVSCDFYSWTRDNFACVTSDQEQDAMGSLKATSFGSLRCQVKVRNSGKDSLAVYVKKGYESTAAGQKSFEPTGFQNVLSGLYSPVVFSASGANLTDTHTYCLLACDNDSCCDGFIITQVKGGPTICGLLSSPDILLCHINDWRDTSATQANATCAGVTYDQGSRQMTLSLGGQEFLQGLALLEGTQDSFTSFQQVYLWKDSDMGSRPESMGCERGMVPRSDFPGDMATELFSPVDITQVIVNTSHSLPSQQYWLFTHLFSAEQANLWCLSRCAQEPIFCQLADITKSSSLYFTCFLYPEAQVCDNVMESNAKNCSQILPHQPTALFRRKVVLNDRVKNFYTRLPFQKLTGISIRDKVPMSGKLISNGFFECERLCDRDPCCTGFGFLNVSQLQGGEVTCLTLNSMGIQTCNEESGATWRILDCGSEDTEVHTYPFGWYQKPAVWSDTPSFCPSAALQSLTEEKVTSDSWQTLALSSVIVDPSIKHFDVAHISTAATSNFSMAQDFCLQQCSRHQDCLVTTLQIQPGVVRCVFYPDIQNCIHSLRSHTCWLLLHEEATYIYRKSGIPLVQSDVTSTPSVRIDSFGQLQGGSQVIKVGTAWKQVYRFLGVPYAAPPLADNRFRAPEVLNWTGSWDATKPRASCWQPGTRTPTPPQINEDCLYLNVFVPENLVSNASVLVFFHNTMEMEGSGGQLTIDGSILAAVGNFIVVTANYRLGVFGFLSSGSDEVAGNWGLLDQVAALTWVQSHIGAFGGDPQRVTLAADRSGADVASIHLLISRPTRLQLFRKALLMGGSALSPAAIISPERAQQQAAALAKEVGCPTSSIQEVVSCLRQKPANILNDAQTKLLAVSGPFHYWGPVVDGQYLRELPSRRLKRPLPVKVDLLIGGSQDDGLINRAKAVKQFEESQGRTNSKTAFYQALQNSLGGEDSDARILAAAVWYYSLEHSTDDYASFSRALENATRDYFIICPMVNMASLWARRTRGNVFMYHVPESYGHGSLELLADVQYAFGLPFYSAYQGQFSTEEQSLSLKVMQYFSNFIRSGNPNYPHEFSRKAAEFATPWPDFIPGAGGESYKELSAQLPNRQGLKQADCSFWSKYIQTLKDADGAKDAQLTKSEEEDLEVGPGLEEDLSGSLEPVPKSYSK.

Residues 1–20 (MTALVLWVSTLLSSVCLVAA) form the signal peptide. Tyrosine 25 carries the iodotyrosine; alternate modification. Tyrosine 25 is subject to Sulfotyrosine; alternate. The residue at position 25 (tyrosine 25) is a Thyroxine; alternate. At tyrosine 25 the chain carries Triiodothyronine; alternate. Thyroglobulin type-1 domains are found at residues 32-93 (LRPC…PTVC), 94-161 (LSFC…PTRC), 162-298 (PRSC…RFRC), and 299-359 (PTKC…PPSC). 8 cysteine pairs are disulfide-bonded: cysteine 35/cysteine 53, cysteine 64/cysteine 71, cysteine 73/cysteine 93, cysteine 97/cysteine 121, cysteine 132/cysteine 139, cysteine 141/cysteine 161, cysteine 165/cysteine 184, and cysteine 195/cysteine 236. Position 109 is an iodotyrosine (tyrosine 109). An N-linked (GlcNAc...) asparagine glycan is attached at asparagine 111. At tyrosine 150 the chain carries Iodotyrosine; alternate. Tyrosine 150 is subject to Diiodotyrosine; alternate. An N-linked (GlcNAc...) asparagine glycan is attached at asparagine 199. An iodotyrosine mark is found at tyrosine 235 and tyrosine 259. Disulfide bonds link cysteine 302-cysteine 320, cysteine 331-cysteine 337, cysteine 339-cysteine 359, cysteine 365-cysteine 620, cysteine 408-cysteine 608, cysteine 631-cysteine 636, cysteine 638-cysteine 658, cysteine 662-cysteine 687, and cysteine 698-cysteine 703. N-linked (GlcNAc...) asparagine glycosylation is found at asparagine 484 and asparagine 496. 6 Thyroglobulin type-1 domains span residues 605 to 658 (AQAC…RPRC), 659 to 726 (PTKC…AKQC), 727 to 922 (PSVC…IPAC), 923 to 1074 (PGPC…MPQC), 1075 to 1146 (PTNC…SAQC), and 1147 to 1211 (PGLC…QPAC). Tyrosine 704 bears the Iodotyrosine; alternate mark. Tyrosine 704 carries the thyroxine; alternate modification. Tyrosine 704 is modified (triiodothyronine; alternate). Residue tyrosine 704 is modified to Diiodotyrosine; alternate. Cystine bridges form between cysteine 705/cysteine 726, cysteine 730/cysteine 763, cysteine 774/cysteine 899, cysteine 901/cysteine 922, cysteine 926/cysteine 1032, cysteine 1043/cysteine 1050, cysteine 1052/cysteine 1074, cysteine 1078/cysteine 1109, cysteine 1127/cysteine 1146, cysteine 1150/cysteine 1170, cysteine 1182/cysteine 1189, cysteine 1191/cysteine 1211, cysteine 1216/cysteine 1265, cysteine 1232/cysteine 1246, cysteine 1306/cysteine 1356, and cysteine 1331/cysteine 1347. Residue asparagine 748 is glycosylated (N-linked (GlcNAc...) asparagine). Tyrosine 785 carries the iodotyrosine modification. Asparagine 817 is a glycosylation site (N-linked (GlcNAc...) asparagine). At tyrosine 867 the chain carries Iodotyrosine; alternate. Diiodotyrosine; alternate is present on tyrosine 867. Tyrosine 884 carries the post-translational modification Diiodotyrosine. An N-linked (GlcNAc...) asparagine glycan is attached at asparagine 948. Tyrosine 993 carries the iodotyrosine; alternate modification. A Diiodotyrosine; alternate modification is found at tyrosine 993. A glycan (N-linked (GlcNAc...) asparagine) is linked at asparagine 1141. Tyrosine 1310 is subject to Iodotyrosine. Tyrosine 1310 is subject to Thyroxine. N-linked (GlcNAc...) asparagine glycosylation is found at asparagine 1349 and asparagine 1365. 9 cysteine pairs are disulfide-bonded: cysteine 1441–cysteine 1458, cysteine 1461–cysteine 1472, cysteine 1475–cysteine 1489, cysteine 1492–cysteine 1509, cysteine 1513–cysteine 1522, cysteine 1542–cysteine 1564, cysteine 1602–cysteine 1626, cysteine 1606–cysteine 1612, and cysteine 1638–cysteine 1661. 3 Type II repeats span residues 1455–1468 (ALGCVKCPEGSFSQ), 1469–1485 (DGRCTPCPAGTYQEQAG), and 1486–1502 (SSACIPCPRGRTTITTG). The Thyroglobulin type-1 11 domain occupies 1510–1564 (VTDCQKNEAGLQCDQNGQYQASQKNRDSGEVFCVDSEGRKLQWLQTEAGLSESQC). The stretch at 1602–1722 (CLTDCANDEA…GANLTDTHTY (121 aa)) is one Type IIIA repeat. N-linked (GlcNAc...) asparagine glycans are attached at residues asparagine 1715, asparagine 1729, asparagine 1773, and asparagine 1864. Intrachain disulfides connect cysteine 1723–cysteine 1748, cysteine 1727–cysteine 1733, cysteine 1732–cysteine 1834, and cysteine 1759–cysteine 1776. Residues 1723 to 1889 (CLLACDNDSC…LFSAEQANLW (167 aa)) form a Type IIIB repeat. Cystine bridges form between cysteine 1890-cysteine 1916, cysteine 1894-cysteine 1901, cysteine 1925-cysteine 1936, cysteine 1993-cysteine 2021, cysteine 1997-cysteine 2003, cysteine 2002-cysteine 2073, and cysteine 2032-cysteine 2045. The stretch at 1890–1992 (CLSRCAQEPI…GKLISNGFFE (103 aa)) is one Type IIIA repeat. Asparagine 1935 carries an N-linked (GlcNAc...) asparagine glycan. A Type IIIB repeat occupies 1993-2125 (CERLCDRDPC…AATSNFSMAQ (133 aa)). Asparagine 2010 carries N-linked (GlcNAc...) asparagine glycosylation. Residue asparagine 2120 is glycosylated (N-linked (GlcNAc...) asparagine). A Type IIIA repeat occupies 2126 to 2183 (DFCLQQCSRHQDCLVTTLQIQPGVVRCVFYPDIQNCIHSLRSHTCWLLLHEEATYIYR). Intrachain disulfides connect cysteine 2128-cysteine 2152, cysteine 2132-cysteine 2138, and cysteine 2161-cysteine 2170. Tyrosine 2182 is modified (iodotyrosine). Residues 2186–2766 (GIPLVQSDVT…LEPVPKSYSK (581 aa)) form a cholinesterase-like (ChEL) region. Asparagine 2249 is a glycosylation site (N-linked (GlcNAc...) asparagine). A disulfide bridge links cysteine 2263 with cysteine 2280. N-linked (GlcNAc...) asparagine glycosylation occurs at asparagine 2294. A disulfide bond links cysteine 2441 and cysteine 2452. Position 2539 is a thyroxine (tyrosine 2539). The residue at position 2572 (tyrosine 2572) is an Iodotyrosine; alternate. Tyrosine 2572 is subject to Thyroxine; alternate. Position 2572 is a triiodothyronine; alternate (tyrosine 2572). Tyrosine 2572 carries the diiodotyrosine; alternate modification. Asparagine 2581 carries N-linked (GlcNAc...) asparagine glycosylation. An iodotyrosine mark is found at tyrosine 2586 and tyrosine 2616. Cysteines 2590 and 2714 form a disulfide. Tyrosine 2696 is modified (diiodotyrosine). Residues 2729–2766 (GAKDAQLTKSEEEDLEVGPGLEEDLSGSLEPVPKSYSK) form a disordered region. Residues 2739 to 2753 (EEEDLEVGPGLEEDL) are compositionally biased toward acidic residues. Tyrosine 2764 carries the post-translational modification Iodotyrosine; alternate. A Thyroxine; alternate modification is found at tyrosine 2764. At tyrosine 2764 the chain carries Triiodothyronine; alternate. Tyrosine 2764 is subject to Diiodotyrosine; alternate.

The protein belongs to the type-B carboxylesterase/lipase family. In terms of assembly, monomer. Homodimer (via ChEL region); occurs in the endoplasmic reticulum and is required for export to the Golgi apparatus. Homooligomer; disulfide-linked; stored in this form in the thyroid follicle lumen. Iodinated on tyrosine residues by TPO. There are 4 pairs of iodinated tyrosines used for coupling: acceptor Tyr-25 is coupled to donor Tyr-150 or Tyr-235, acceptor Tyr-2572 is coupled to donor Tyr-2539, acceptor Tyr-2764 in monomer 1 is coupled to donor Tyr-2764 in monomer 2 and acceptor Tyr-1310 in monomer 1 is coupled to donor Tyr-109 in monomer 2. In terms of processing, sulfated tyrosines are desulfated during iodination. Post-translationally, undergoes sequential proteolysis by cathepsins to release thyroxine (T4) and triiodothyronine (T3) hormones. In the thyroid follicle lumen, cross-linked TG (storage form) is solubilized by limited proteolysis mediated by cathepsins CTSB and/or CTSL. Partially cleaved TG is further processed by CTSK/cathepsin K and/or CTSL resulting in the release of T4. Following endocytosis, further processing occurs leading to the release of T3 and more T4 hormones. As to expression, specifically expressed in the thyroid gland.

It localises to the secreted. Acts as a substrate for the production of iodinated thyroid hormones thyroxine (T4) and triiodothyronine (T3). The synthesis of T3 and T4 involves iodination of selected tyrosine residues of TG/thyroglobulin followed by their oxidative coupling. Following TG re-internalization and lysosomal-mediated proteolysis, T3 and T4 are released from the polypeptide backbone leading to their secretion into the bloodstream. One dimer produces 7 thyroid hormone molecules. In Mus musculus (Mouse), this protein is Thyroglobulin (Tg).